The following is a 67-amino-acid chain: MRLKHNEMRSPIMSCSKRMEWKSMPSPLIFKQQMILTQSLNQKLKTIKACMYQIRKLSKLKALYRGL.

The protein belongs to the rhabdoviruses C protein family.

Its function is as follows. Seems to stimulates transcription by the viral polymerase. May play a role in viral pathogenesis or transmission by insects vectors. This is Protein C' (P) from Vesicular stomatitis Indiana virus (strain 85CLB South America) (VSIV).